The following is a 98-amino-acid chain: Large ribosomal subunit protein uL23 (98 aa).

This sequence belongs to the universal ribosomal protein uL23 family. As to quaternary structure, part of the 50S ribosomal subunit. Contacts protein L29, and trigger factor when it is bound to the ribosome.

Functionally, one of the early assembly proteins it binds 23S rRNA. One of the proteins that surrounds the polypeptide exit tunnel on the outside of the ribosome. Forms the main docking site for trigger factor binding to the ribosome. This is Large ribosomal subunit protein uL23 from Nitrobacter hamburgensis (strain DSM 10229 / NCIMB 13809 / X14).